Here is a 226-residue protein sequence, read N- to C-terminus: X-linked lymphocyte-regulated protein 3A (226 aa).

Over residues Met1–Met18 the composition is skewed to basic and acidic residues. Positions Met1–Pro72 are disordered. The span at Asn21 to Pro30 shows a compositional bias: polar residues. Composition is skewed to basic and acidic residues over residues Glu39 to Ile48 and Gln56 to Leu65. Residues Glu155–Gln210 adopt a coiled-coil conformation.

This sequence belongs to the XLR/SYCP3 family. In terms of tissue distribution, expressed in lymphoid cells.

The protein is X-linked lymphocyte-regulated protein 3A (Xlr3a) of Mus musculus (Mouse).